A 539-amino-acid chain; its full sequence is GMP synthase [glutamine-hydrolyzing] (539 aa).

Positions 20 to 215 (TILILDFGSQ…AIEICHAKPN (196 aa)) constitute a Glutamine amidotransferase type-1 domain. Cysteine 96 functions as the Nucleophile in the catalytic mechanism. Active-site residues include histidine 189 and glutamate 191. The GMPS ATP-PPase domain maps to 216-413 (WSMENFVDKE…LGIEHSLVWR (198 aa)). 244–250 (SGGVDST) lines the ATP pocket. XMP is bound by residues arginine 317, aspartate 475, lysine 531, and glutamate 537.

In terms of assembly, homodimer. It depends on Mg(2+) as a cofactor.

The protein resides in the cytoplasm. The protein localises to the cytosol. It catalyses the reaction XMP + L-glutamine + ATP + H2O = GMP + L-glutamate + AMP + diphosphate + 2 H(+). Its pathway is purine metabolism; GMP biosynthesis; GMP from XMP (L-Gln route): step 1/1. Catalyzes the conversion of xanthine monophosphate (XMP) to GMP in the presence of glutamine and ATP through an adenyl-XMP intermediate. The polypeptide is GMP synthase [glutamine-hydrolyzing] (Schizosaccharomyces pombe (strain 972 / ATCC 24843) (Fission yeast)).